The following is a 541-amino-acid chain: Tryptophan N-monooxygenase 1 (541 aa).

The helical transmembrane segment at 21 to 41 (FSTLYLLSTLQAFVAITLVML) threads the bilayer. Cys-477 serves as a coordination point for heme.

Belongs to the cytochrome P450 family. Heme is required as a cofactor. In terms of tissue distribution, found in all tissues tested. Highest expression in roots, and low expression in stem.

It is found in the membrane. It carries out the reaction L-tryptophan + 2 reduced [NADPH--hemoprotein reductase] + 2 O2 = (E)-(indol-3-yl)acetaldehyde oxime + 2 oxidized [NADPH--hemoprotein reductase] + CO2 + 3 H2O + 2 H(+). Its function is as follows. Converts tryptophan to indole-3-acetaldoxime, a precursor for tryptophan-derived glucosinolates and indole-3-acetic acid (IAA). Involved in the biosynthetic pathway to 4-hydroxyindole-3-carbonyl nitrile (4-OH-ICN), a cyanogenic metabolite required for inducible pathogen defense. This Arabidopsis thaliana (Mouse-ear cress) protein is Tryptophan N-monooxygenase 1 (CYP79B2).